The sequence spans 85 residues: uncharacterized protein (85 aa).

2 helical membrane-spanning segments follow: residues 13–35 and 59–81; these read KWLAVAICLAMVGMAVMPAFQPL and EGIVITATLAAAAATAELVHLLL.

It is found in the cell membrane. This is an uncharacterized protein from Archaeoglobus fulgidus (strain ATCC 49558 / DSM 4304 / JCM 9628 / NBRC 100126 / VC-16).